Here is an 86-residue protein sequence, read N- to C-terminus: Anti-adapter protein IraP (86 aa).

Residues Met1 to Met36 are a coiled coil.

This sequence belongs to the IraP family. Interacts with RssB.

The protein localises to the cytoplasm. Its function is as follows. Inhibits RpoS proteolysis by regulating RssB activity, thereby increasing the stability of the sigma stress factor RpoS especially during phosphate starvation, but also in stationary phase and during nitrogen starvation. Its effect on RpoS stability is due to its interaction with RssB, which probably blocks the interaction of RssB with RpoS, and the consequent delivery of the RssB-RpoS complex to the ClpXP protein degradation pathway. This chain is Anti-adapter protein IraP, found in Escherichia coli (strain SE11).